Reading from the N-terminus, the 547-residue chain is Probable terpene synthase 3 (547 aa).

Asp298, Asp302, and Glu451 together coordinate Mg(2+). Residues 298–302 (DDIYD) carry the DDXXD motif motif.

Belongs to the terpene synthase family. It depends on Mg(2+) as a cofactor.

Its function is as follows. Probable sesquiterpene synthase. This Ricinus communis (Castor bean) protein is Probable terpene synthase 3 (TPS3).